A 61-amino-acid polypeptide reads, in one-letter code: Short neurotoxin 2 (61 aa).

4 disulfide bridges follow: Cys-3/Cys-23, Cys-17/Cys-40, Cys-42/Cys-53, and Cys-54/Cys-59.

It belongs to the three-finger toxin family. Short-chain subfamily. Type I alpha-neurotoxin sub-subfamily. Expressed by the venom gland.

It localises to the secreted. Its function is as follows. Binds to muscle nicotinic acetylcholine receptor (nAChR) and inhibit acetylcholine from binding to the receptor, thereby impairing neuromuscular transmission. This chain is Short neurotoxin 2, found in Naja haje haje (Egyptian cobra).